We begin with the raw amino-acid sequence, 344 residues long: Meiotic recombination protein DMC1 homolog (344 aa).

A disordered region spans residues 1 to 22; the sequence is MMASLKAEETSQMQLVEREEND. 133–140 serves as a coordination point for ATP; it reads GEFRSGKT. Residue Arg235 coordinates dsDNA. Residues Arg235, Phe238, Arg241, Arg247, and Arg315 each coordinate ssDNA. Residues Arg241 and Arg247 each coordinate dsDNA.

It belongs to the RecA family. DMC1 subfamily. In terms of assembly, double stacked ring-shaped homooctamer. Interacts with BRCA2A and BRCA2B. As to expression, expressed in mitotic and/or meiotic tissues. Expressed in roots, leaves and anthers and carpels of young fower buds.

Its subcellular location is the nucleus. Its function is as follows. May participate in meiotic recombination, specifically in homologous strand assimilation, which is required for the resolution of meiotic double-strand breaks. Mediates interhomolog recombination during meiosis. The chain is Meiotic recombination protein DMC1 homolog from Arabidopsis thaliana (Mouse-ear cress).